A 65-amino-acid chain; its full sequence is Large ribosomal subunit protein bL35 (65 aa).

This sequence belongs to the bacterial ribosomal protein bL35 family.

In Agathobacter rectalis (strain ATCC 33656 / DSM 3377 / JCM 17463 / KCTC 5835 / VPI 0990) (Eubacterium rectale), this protein is Large ribosomal subunit protein bL35.